A 425-amino-acid polypeptide reads, in one-letter code: Serine--tRNA ligase (425 aa).

Residue 230-232 coordinates L-serine; sequence TGE. An ATP-binding site is contributed by 261 to 263; that stretch reads RKE. Glu-284 contributes to the L-serine binding site. An ATP-binding site is contributed by 348 to 351; the sequence is EISS. Ser-385 contributes to the L-serine binding site.

This sequence belongs to the class-II aminoacyl-tRNA synthetase family. Type-1 seryl-tRNA synthetase subfamily. Homodimer. The tRNA molecule binds across the dimer.

Its subcellular location is the cytoplasm. The catalysed reaction is tRNA(Ser) + L-serine + ATP = L-seryl-tRNA(Ser) + AMP + diphosphate + H(+). It catalyses the reaction tRNA(Sec) + L-serine + ATP = L-seryl-tRNA(Sec) + AMP + diphosphate + H(+). Its pathway is aminoacyl-tRNA biosynthesis; selenocysteinyl-tRNA(Sec) biosynthesis; L-seryl-tRNA(Sec) from L-serine and tRNA(Sec): step 1/1. Its function is as follows. Catalyzes the attachment of serine to tRNA(Ser). Is also able to aminoacylate tRNA(Sec) with serine, to form the misacylated tRNA L-seryl-tRNA(Sec), which will be further converted into selenocysteinyl-tRNA(Sec). The protein is Serine--tRNA ligase of Wolbachia sp. subsp. Brugia malayi (strain TRS).